Consider the following 97-residue polypeptide: Large ribosomal subunit protein bL25 (97 aa).

The protein belongs to the bacterial ribosomal protein bL25 family. Part of the 50S ribosomal subunit; part of the 5S rRNA/L5/L18/L25 subcomplex. Contacts the 5S rRNA. Binds to the 5S rRNA independently of L5 and L18.

Its function is as follows. This is one of the proteins that binds to the 5S RNA in the ribosome where it forms part of the central protuberance. This is Large ribosomal subunit protein bL25 from Buchnera aphidicola subsp. Baizongia pistaciae (strain Bp).